The chain runs to 190 residues: Nucleoside triphosphate pyrophosphatase (190 aa).

Catalysis depends on D69, which acts as the Proton acceptor.

This sequence belongs to the Maf family. The cofactor is a divalent metal cation.

It localises to the cytoplasm. The catalysed reaction is a ribonucleoside 5'-triphosphate + H2O = a ribonucleoside 5'-phosphate + diphosphate + H(+). The enzyme catalyses a 2'-deoxyribonucleoside 5'-triphosphate + H2O = a 2'-deoxyribonucleoside 5'-phosphate + diphosphate + H(+). Nucleoside triphosphate pyrophosphatase. May have a dual role in cell division arrest and in preventing the incorporation of modified nucleotides into cellular nucleic acids. This Helicobacter pylori (strain J99 / ATCC 700824) (Campylobacter pylori J99) protein is Nucleoside triphosphate pyrophosphatase.